The chain runs to 321 residues: Malate dehydrogenase (321 aa).

Residues 10–15 (GAGQIG) and aspartate 34 contribute to the NAD(+) site. 2 residues coordinate substrate: arginine 83 and arginine 89. Residues asparagine 96 and 119–121 (VTN) contribute to the NAD(+) site. Residues asparagine 121 and arginine 152 each coordinate substrate. Catalysis depends on histidine 176, which acts as the Proton acceptor.

This sequence belongs to the LDH/MDH superfamily. MDH type 3 family.

The enzyme catalyses (S)-malate + NAD(+) = oxaloacetate + NADH + H(+). In terms of biological role, catalyzes the reversible oxidation of malate to oxaloacetate. This is Malate dehydrogenase from Azorhizobium caulinodans (strain ATCC 43989 / DSM 5975 / JCM 20966 / LMG 6465 / NBRC 14845 / NCIMB 13405 / ORS 571).